The sequence spans 603 residues: MDLGGGVGVVMAAVDGGGGGELGGGGLLGSRLMKHGRGNAGDQEHEWRPPAKQARGGDASSAAAAVAAAAAVSEAVKVAAPFLLGASCSPGHGGEQMLSFSSSASSCSSGGGGAAVAAAAAAGGAMPLYYGTPASCSGLSSVSLSSSMQGAMARVRGPFTPSQWIELEHQALIYKYLAANSPVPHSLLIPIRRSLTSPYSPAYFGSSTLGWGSFQLGYSGSADPEPGRCRRTDGKKWRCSRDAVADQKYCERHMNRGRHRSRKHVEGQPGHAAKAMPAAVAAAAASATQPSAPAAHSGGAVAGLAINHQHQQMKNYAANTANPCSLQYSRDLANKHNESEQVQDSDSLSMLTSISTRNTGSLFPFSKQHNPFEVSNSRPDFGLVSPDSLMSSPHSSLENVNLLTSQSLNEQQSSVSLQHFVDWPRTPAQGALAWPDAEDMQAQRSQLSISAPMASSDLSSASTSPIHEKLMLSPLKLSREYSPIGLGFAANRDEVNQGEANWMPMFRDSLMGGPLGEVLTKNNNMEARNCLSESLNLLNDGWDSSSGFDSSPVGVLQKTTFGSVSSSTGSSPRLENHSVYDGNSNLRDDLGSVVVNHPSIRLV.

A disordered region spans residues K34–D58. Residues P158–R193 form the QLQ domain. The region spanning D223 to G267 is the WRC domain. Short sequence motifs (bipartite nuclear localization signal) lie at residues R228–R238 and R256–K263. The span at F561–S571 shows a compositional bias: low complexity. Residues F561–G582 are disordered.

This sequence belongs to the GRF family.

The protein localises to the nucleus. In terms of biological role, transcription activator that plays a regulatory role in gibberellin-induced stem elongation. The protein is Growth-regulating factor 6 (GRF6) of Oryza sativa subsp. japonica (Rice).